A 161-amino-acid polypeptide reads, in one-letter code: Lipoprotein signal peptidase (161 aa).

3 helical membrane-spanning segments follow: residues W9 to E29, W64 to L84, and M96 to A113. Active-site residues include D120 and D138. Residues V133–F153 form a helical membrane-spanning segment.

It belongs to the peptidase A8 family.

Its subcellular location is the cell inner membrane. It carries out the reaction Release of signal peptides from bacterial membrane prolipoproteins. Hydrolyzes -Xaa-Yaa-Zaa-|-(S,diacylglyceryl)Cys-, in which Xaa is hydrophobic (preferably Leu), and Yaa (Ala or Ser) and Zaa (Gly or Ala) have small, neutral side chains.. It functions in the pathway protein modification; lipoprotein biosynthesis (signal peptide cleavage). In terms of biological role, this protein specifically catalyzes the removal of signal peptides from prolipoproteins. This is Lipoprotein signal peptidase from Haemophilus ducreyi (strain 35000HP / ATCC 700724).